Consider the following 275-residue polypeptide: N-(5'-phosphoribosyl)anthranilate isomerase 1, chloroplastic (275 aa).

The N-terminal 32 residues, 1–32, are a transit peptide targeting the chloroplast; it reads MSTGISTDLHVHFGALNFSKTYKSGLSNRTVS.

This sequence belongs to the TrpF family. In terms of tissue distribution, expressed in roots and shoots.

It is found in the plastid. Its subcellular location is the chloroplast. The enzyme catalyses N-(5-phospho-beta-D-ribosyl)anthranilate = 1-(2-carboxyphenylamino)-1-deoxy-D-ribulose 5-phosphate. It participates in amino-acid biosynthesis; L-tryptophan biosynthesis; L-tryptophan from chorismate: step 3/5. Catalyzes the conversion of 5-phosphoribosylanthranilate to l-(O-carboxyphenylamino)-l-deoxyribulose-5-phosphate, which is the third step of the tryptophan biosynthetic pathway. The protein is N-(5'-phosphoribosyl)anthranilate isomerase 1, chloroplastic (PAI1) of Arabidopsis thaliana (Mouse-ear cress).